Here is a 147-residue protein sequence, read N- to C-terminus: FAD synthase (147 aa).

ATP contacts are provided by residues 13–14 (TF), 18–21 (HEGH), aspartate 100, and phenylalanine 127.

This sequence belongs to the archaeal FAD synthase family. Homodimer. Requires a divalent metal cation as cofactor.

The catalysed reaction is FMN + ATP + H(+) = FAD + diphosphate. Its pathway is cofactor biosynthesis; FAD biosynthesis; FAD from FMN: step 1/1. Catalyzes the transfer of the AMP portion of ATP to flavin mononucleotide (FMN) to produce flavin adenine dinucleotide (FAD) coenzyme. In Korarchaeum cryptofilum (strain OPF8), this protein is FAD synthase.